The following is a 576-amino-acid chain: Zinc finger protein 791 (576 aa).

In terms of domain architecture, KRAB spans 4-90; sequence VAFKDVSVSF…AETFSPNLSV (87 aa). C2H2-type zinc fingers lie at residues 100–122, 132–154, 160–182, 188–210, 216–238, 244–266, 272–294, 300–322, 328–350, 356–378, 384–406, 412–434, 440–462, 468–490, 496–518, 524–546, and 552–574; these read YECT…MRSH, YKCK…ERSH, YKCK…EQTH, YECK…ERIH, YECK…ERTH, YACK…MITH, YKCK…ERIH, YTCK…ERIH, YKCK…VRVH, YKCK…ERTH, YECK…KRNH, YECK…MITH, YKCR…ERTH, YECK…KRTH, YECK…MRMH, YKCK…TRIH, and LECK…MRMH.

This sequence belongs to the krueppel C2H2-type zinc-finger protein family.

Its subcellular location is the nucleus. Its function is as follows. May be involved in transcriptional regulation. The sequence is that of Zinc finger protein 791 (ZNF791) from Pongo abelii (Sumatran orangutan).